A 572-amino-acid polypeptide reads, in one-letter code: Proline--tRNA ligase (572 aa).

Belongs to the class-II aminoacyl-tRNA synthetase family. ProS type 1 subfamily. In terms of assembly, homodimer.

It localises to the cytoplasm. It carries out the reaction tRNA(Pro) + L-proline + ATP = L-prolyl-tRNA(Pro) + AMP + diphosphate. Its function is as follows. Catalyzes the attachment of proline to tRNA(Pro) in a two-step reaction: proline is first activated by ATP to form Pro-AMP and then transferred to the acceptor end of tRNA(Pro). As ProRS can inadvertently accommodate and process non-cognate amino acids such as alanine and cysteine, to avoid such errors it has two additional distinct editing activities against alanine. One activity is designated as 'pretransfer' editing and involves the tRNA(Pro)-independent hydrolysis of activated Ala-AMP. The other activity is designated 'posttransfer' editing and involves deacylation of mischarged Ala-tRNA(Pro). The misacylated Cys-tRNA(Pro) is not edited by ProRS. This chain is Proline--tRNA ligase, found in Psychrobacter arcticus (strain DSM 17307 / VKM B-2377 / 273-4).